The following is an 832-amino-acid chain: uncharacterized protein (832 aa).

This is an uncharacterized protein from Rickettsia bellii (strain RML369-C).